A 1445-amino-acid polypeptide reads, in one-letter code: 3'-5' RNA helicase YTHDC2 (1445 aa).

The tract at residues 1-50 is disordered; it reads MSRPSSVSPRPPAPSGGGTGGGGGGSGGGGGGGGGGPASCGPGGGGRAKG. Gly residues predominate over residues 15–48; it reads SGGGTGGGGGGSGGGGGGGGGGPASCGPGGGGRA. The R3H domain maps to 53 to 121; that stretch reads DIRIDEEVKI…NRYLTVKKKD (69 aa). One can recognise a Helicase ATP-binding domain in the interval 218–384; sequence VKIIKENKVV…FGSCPVIYIQ (167 aa). 231–238 is a binding site for ATP; it reads GETGSGKT. The DEAH box motif lies at 331–334; it reads DEVH. ANK repeat units follow at residues 521-553 and 554-586; these read TSAT…SKAS and NGWM…FGNL. Positions 627-799 constitute a Helicase C-terminal domain; sequence LLYNICHSCD…ELCLHTKLLA (173 aa). 3 positions are modified to phosphoserine: serine 1104, serine 1105, and serine 1107. The span at 1179-1189 shows a compositional bias: polar residues; sequence EQSAGLQQPSG. The disordered stretch occupies residues 1179–1303; it reads EQSAGLQQPS…SPSPRPNMPI (125 aa). Residues 1246–1264 show a composition bias toward basic and acidic residues; that stretch reads KYKDRGILHPKRSTDDRSD. Residues 1265–1279 show a composition bias toward low complexity; that stretch reads QSSVKSTDSSSYPSP. A phosphoserine mark is found at serine 1278, serine 1282, and serine 1296. Residues 1303–1433 enclose the YTH domain; sequence IRYFIMKSSN…QVGEQLLQLW (131 aa). RNA is bound by residues 1309–1311, tryptophan 1325, and tryptophan 1375; that span reads KSS.

The protein belongs to the DEAD box helicase family. DEAH subfamily. In terms of assembly, interacts with MEIOC; binds transcripts that regulate the mitotic cell cycle inhibiting progression into metaphase, thereby allowing meiotic prophase to proceed normally. Interacts (via ANK repeats) with XRN1. Interacts with ZCCHC4. Associates with the small ribosomal subunit. Interacts with RBM46. In terms of tissue distribution, present in male and female germ cells (at protein level). Highly expressed in testis. Not detected in spermatogonia next to the tubule wall but is strongly expressed in spermatocytes, suggesting that it is up-regulated in germ cells upon entry into meiosis (at protein level).

It is found in the cytoplasm. The protein localises to the perinuclear region. It catalyses the reaction ATP + H2O = ADP + phosphate + H(+). Functionally, 3'-5' RNA helicase that plays a key role in the male and female germline by promoting transition from mitotic to meiotic divisions in stem cells. Specifically recognizes and binds N6-methyladenosine (m6A)-containing RNAs, a modification present at internal sites of mRNAs and some non-coding RNAs that plays a role in the efficiency of RNA processing and stability. Essential for ensuring a successful progression of the meiotic program in the germline by regulating the level of m6A-containing RNAs. Acts by binding and promoting degradation of m6A-containing mRNAs: the 3'-5' RNA helicase activity is required for this process and RNA degradation may be mediated by XRN1 exoribonuclease. Required for both spermatogenesis and oogenesis. The polypeptide is 3'-5' RNA helicase YTHDC2 (Mus musculus (Mouse)).